The chain runs to 149 residues: Large ribosomal subunit protein uL24 (149 aa).

The interval 114–149 (RKIIERSGGTPEVEAVPEKSEEEKEEKEKEEEKSEE) is disordered. Residues 129-149 (VPEKSEEEKEEKEKEEEKSEE) show a composition bias toward basic and acidic residues.

Belongs to the universal ribosomal protein uL24 family. In terms of assembly, part of the 50S ribosomal subunit.

In terms of biological role, one of two assembly initiator proteins, it binds directly to the 5'-end of the 23S rRNA, where it nucleates assembly of the 50S subunit. Located at the polypeptide exit tunnel on the outside of the subunit. The sequence is that of Large ribosomal subunit protein uL24 from Methanopyrus kandleri (strain AV19 / DSM 6324 / JCM 9639 / NBRC 100938).